A 158-amino-acid polypeptide reads, in one-letter code: NAD(P)H-quinone oxidoreductase subunit J, chloroplastic (158 aa).

The protein belongs to the complex I 30 kDa subunit family. NDH is composed of at least 16 different subunits, 5 of which are encoded in the nucleus.

It is found in the plastid. The protein localises to the chloroplast thylakoid membrane. It catalyses the reaction a plastoquinone + NADH + (n+1) H(+)(in) = a plastoquinol + NAD(+) + n H(+)(out). The enzyme catalyses a plastoquinone + NADPH + (n+1) H(+)(in) = a plastoquinol + NADP(+) + n H(+)(out). NDH shuttles electrons from NAD(P)H:plastoquinone, via FMN and iron-sulfur (Fe-S) centers, to quinones in the photosynthetic chain and possibly in a chloroplast respiratory chain. The immediate electron acceptor for the enzyme in this species is believed to be plastoquinone. Couples the redox reaction to proton translocation, and thus conserves the redox energy in a proton gradient. The protein is NAD(P)H-quinone oxidoreductase subunit J, chloroplastic of Ranunculus macranthus (Large buttercup).